A 395-amino-acid chain; its full sequence is MTSILTNIAAMAALQTLRTIGSNMEETQAHVSSGLRVGQAADNAAYWSIATTMRSDNMALSAVQDALGLGAAKVDTAYSGMESAIEVVKEIKKKLVAATEDGVDKAKIQEEIDQLKDQLTSISEAASFSGENWLQADLSGGAVTKSVVGSFVRDASGAVSVKKVDYSLNTNSVLFDTVGNTGILDKVYNVSQASVTLTINTNGVASQHTVAAYSLESLTQAGAEFQGNYALQGGNSYVKVDNVWVRAETAATGATGQELAATTTAAGTITADSWVVDVGNAPAANVSAGQSVAGINIVGMGAAALDALISGVDAALTDMTSAAADLGSIAMRIDLQSDFVNKLSDSIDSGVGRLVDADMNEESTRLKALQTQQQLAIQSLSIANSASENVLTLFR.

The protein belongs to the bacterial flagellin family.

It localises to the secreted. Its subcellular location is the bacterial flagellum. Its function is as follows. Flagellin is the subunit protein which polymerizes to form the filaments of bacterial flagella. The protein is Flagellin B (flaB) of Rhizobium meliloti (Ensifer meliloti).